The chain runs to 589 residues: Serine/threonine-protein kinase PknJ (589 aa).

The Cytoplasmic segment spans residues 1–342 (MAHELSAGSV…LPRRPRRYRR (342 aa)). The Protein kinase domain occupies 14 to 276 (YRIERMLGAG…SAGEFAHAAA (263 aa)). ATP is bound by residues 20 to 28 (LGAGGMGTV) and Lys-43. Asp-136 acts as the Proton acceptor in catalysis. The chain crosses the membrane as a helical span at residues 343 to 363 (GVAAVAAVMVVAAAAVTAVTM). Over 364-589 (TSHQPRTATP…TNYILAKIPG (226 aa)) the chain is Extracellular. Over residues 365 to 387 (SHQPRTATPPSAAALSPTSSSTT) the composition is skewed to low complexity. The segment at 365 to 400 (SHQPRTATPPSAAALSPTSSSTTPPQPPIVTRSRLP) is disordered.

It belongs to the protein kinase superfamily. Ser/Thr protein kinase family. As to quaternary structure, homodimer.

It is found in the cell membrane. It carries out the reaction L-seryl-[protein] + ATP = O-phospho-L-seryl-[protein] + ADP + H(+). It catalyses the reaction L-threonyl-[protein] + ATP = O-phospho-L-threonyl-[protein] + ADP + H(+). This chain is Serine/threonine-protein kinase PknJ (pknJ), found in Mycobacterium bovis (strain ATCC BAA-935 / AF2122/97).